The following is a 327-amino-acid chain: Biotin synthase (327 aa).

The region spanning 49-282 (FNKEKIDLCS…KKVIRLCGGR (234 aa)) is the Radical SAM core domain. Cys67, Cys71, and Cys74 together coordinate [4Fe-4S] cluster. Ser110, Cys142, Cys201, and Arg277 together coordinate [2Fe-2S] cluster.

The protein belongs to the radical SAM superfamily. Biotin synthase family. Homodimer. The cofactor is [4Fe-4S] cluster. Requires [2Fe-2S] cluster as cofactor.

It carries out the reaction (4R,5S)-dethiobiotin + (sulfur carrier)-SH + 2 reduced [2Fe-2S]-[ferredoxin] + 2 S-adenosyl-L-methionine = (sulfur carrier)-H + biotin + 2 5'-deoxyadenosine + 2 L-methionine + 2 oxidized [2Fe-2S]-[ferredoxin]. It functions in the pathway cofactor biosynthesis; biotin biosynthesis; biotin from 7,8-diaminononanoate: step 2/2. In terms of biological role, catalyzes the conversion of dethiobiotin (DTB) to biotin by the insertion of a sulfur atom into dethiobiotin via a radical-based mechanism. This is Biotin synthase from Methanococcus maripaludis (strain C7 / ATCC BAA-1331).